A 137-amino-acid chain; its full sequence is Small ribosomal subunit protein uS12 (137 aa).

3-methylthioaspartic acid is present on D89. Positions 105 to 137 (AGVAGRTQRRSKYGAKRPKAGQAAAPAKGKGKK) are disordered. Over residues 111-123 (TQRRSKYGAKRPK) the composition is skewed to basic residues. Over residues 124-137 (AGQAAAPAKGKGKK) the composition is skewed to low complexity.

This sequence belongs to the universal ribosomal protein uS12 family. Part of the 30S ribosomal subunit. Contacts proteins S8 and S17. May interact with IF1 in the 30S initiation complex.

Its function is as follows. With S4 and S5 plays an important role in translational accuracy. In terms of biological role, interacts with and stabilizes bases of the 16S rRNA that are involved in tRNA selection in the A site and with the mRNA backbone. Located at the interface of the 30S and 50S subunits, it traverses the body of the 30S subunit contacting proteins on the other side and probably holding the rRNA structure together. The combined cluster of proteins S8, S12 and S17 appears to hold together the shoulder and platform of the 30S subunit. This is Small ribosomal subunit protein uS12 from Phocaeicola vulgatus (strain ATCC 8482 / DSM 1447 / JCM 5826 / CCUG 4940 / NBRC 14291 / NCTC 11154) (Bacteroides vulgatus).